A 673-amino-acid chain; its full sequence is Acetate--CoA ligase [ADP-forming] II (673 aa).

Positions 9-45 constitute an ATP-grasp domain; sequence KALLEKYGIKTAKCIFCETEEQAVKAAKEIGFPVVMK. 35–46 contacts ATP; that stretch reads AKEIGFPVVMKV.

It in the N-terminal section; belongs to the acetate CoA ligase beta subunit family. In the C-terminal section; belongs to the acetate CoA ligase alpha subunit family. In terms of assembly, homodimer.

It carries out the reaction acetate + ATP + CoA = acetyl-CoA + ADP + phosphate. With respect to regulation, activity requires divalent metal cations. In terms of biological role, catalyzes the reversible conversion of a variety of acids to the corresponding acyl-CoA esters. Shows the highest activity with the aryl acids, indoleacetate and phenylacetate, as compared to acetate. In the reverse direction, phenylacetyl-CoA is the best substrate. Seems to be involved primarily in the degradation of aryl-CoA esters to the corresponding acids. Participates in the degradation of branched-chain amino acids via branched-chain-acyl-CoA esters. The sequence is that of Acetate--CoA ligase [ADP-forming] II from Archaeoglobus fulgidus (strain ATCC 49558 / DSM 4304 / JCM 9628 / NBRC 100126 / VC-16).